The sequence spans 460 residues: Argininosuccinate lyase (460 aa).

The protein belongs to the lyase 1 family. Argininosuccinate lyase subfamily.

It localises to the cytoplasm. It catalyses the reaction 2-(N(omega)-L-arginino)succinate = fumarate + L-arginine. It functions in the pathway amino-acid biosynthesis; L-arginine biosynthesis; L-arginine from L-ornithine and carbamoyl phosphate: step 3/3. This chain is Argininosuccinate lyase, found in Prosthecochloris aestuarii (strain DSM 271 / SK 413).